The sequence spans 98 residues: Integration host factor subunit beta (98 aa).

The protein belongs to the bacterial histone-like protein family. Heterodimer of an alpha and a beta chain.

This protein is one of the two subunits of integration host factor, a specific DNA-binding protein that functions in genetic recombination as well as in transcriptional and translational control. The protein is Integration host factor subunit beta of Pseudomonas syringae pv. tomato (strain ATCC BAA-871 / DC3000).